Consider the following 237-residue polypeptide: 1-(5-phosphoribosyl)-5-[(5-phosphoribosylamino)methylideneamino] imidazole-4-carboxamide isomerase (237 aa).

The Proton acceptor role is filled by aspartate 8. Catalysis depends on aspartate 130, which acts as the Proton donor.

This sequence belongs to the HisA/HisF family.

It is found in the cytoplasm. It catalyses the reaction 1-(5-phospho-beta-D-ribosyl)-5-[(5-phospho-beta-D-ribosylamino)methylideneamino]imidazole-4-carboxamide = 5-[(5-phospho-1-deoxy-D-ribulos-1-ylimino)methylamino]-1-(5-phospho-beta-D-ribosyl)imidazole-4-carboxamide. It functions in the pathway amino-acid biosynthesis; L-histidine biosynthesis; L-histidine from 5-phospho-alpha-D-ribose 1-diphosphate: step 4/9. This is 1-(5-phosphoribosyl)-5-[(5-phosphoribosylamino)methylideneamino] imidazole-4-carboxamide isomerase from Caldicellulosiruptor saccharolyticus (strain ATCC 43494 / DSM 8903 / Tp8T 6331).